The following is a 972-amino-acid chain: DNA cross-link repair 1A protein (972 aa).

The interval 14–80 is disordered; sequence YKSIRKRKPQ…SEDLDPCKDD (67 aa). The span at 23 to 37 shows a compositional bias: polar residues; the sequence is QSNPDSTSVSMQTVT. Residues 39-54 are compositionally biased toward basic residues; sequence GKCRPKRKGSGNRKKS. Basic and acidic residues predominate over residues 64–80; the sequence is SEQRLRPSEDLDPCKDD. The segment at 105-135 adopts a UBZ4-type zinc-finger fold; that stretch reads DGYCPSCQMPFSLLVVQTPRWHVAECLDTPG. 4 residues coordinate Zn(2+): Cys-108, Cys-111, His-126, and Cys-130. Disordered stretches follow at residues 191–219 and 552–623; these read KSSCFPSPVEDSQAEKPSKNLKNVPNNEC and GEAC…TTDE. Over residues 210-219 the composition is skewed to polar residues; sequence NLKNVPNNEC.

It belongs to the DNA repair metallo-beta-lactamase (DRMBL) family. As to quaternary structure, binds PIAS1.

The protein resides in the nucleus. It catalyses the reaction a beta-lactam + H2O = a substituted beta-amino acid. Its function is as follows. May be required for DNA interstrand cross-link repair. The chain is DNA cross-link repair 1A protein (DCLRE1A) from Gallus gallus (Chicken).